The sequence spans 236 residues: 7-cyano-7-deazaguanine synthase (236 aa).

An ATP-binding site is contributed by 21-31 (LSGGLDSATVL). Positions 202, 212, 215, and 218 each coordinate Zn(2+).

Belongs to the QueC family. Zn(2+) serves as cofactor.

It catalyses the reaction 7-carboxy-7-deazaguanine + NH4(+) + ATP = 7-cyano-7-deazaguanine + ADP + phosphate + H2O + H(+). Its pathway is purine metabolism; 7-cyano-7-deazaguanine biosynthesis. Its function is as follows. Catalyzes the ATP-dependent conversion of 7-carboxy-7-deazaguanine (CDG) to 7-cyano-7-deazaguanine (preQ(0)). The polypeptide is 7-cyano-7-deazaguanine synthase (Frankia casuarinae (strain DSM 45818 / CECT 9043 / HFP020203 / CcI3)).